Here is a 369-residue protein sequence, read N- to C-terminus: Galactose-1-phosphate uridylyltransferase (369 aa).

The Zn(2+) site is built by Cys54 and Cys57. UDP-alpha-D-glucose contacts are provided by residues Ala63 and 79-80 (ND). His127 serves as a coordination point for Zn(2+). Residue Asn172 participates in UDP-alpha-D-glucose binding. His183 lines the Zn(2+) pocket. His185 serves as the catalytic Tele-UMP-histidine intermediate. UDP-alpha-D-glucose is bound at residue Gln187. Residues Glu201, His300, His317, and His319 each contribute to the Fe cation site. UDP-alpha-D-glucose contacts are provided by residues 332-335 (KFCV) and 337-338 (FE).

The protein belongs to the galactose-1-phosphate uridylyltransferase type 1 family. As to quaternary structure, homodimer. Requires Zn(2+) as cofactor.

The catalysed reaction is alpha-D-galactose 1-phosphate + UDP-alpha-D-glucose = alpha-D-glucose 1-phosphate + UDP-alpha-D-galactose. The protein operates within carbohydrate metabolism; galactose metabolism. The chain is Galactose-1-phosphate uridylyltransferase (gal7) from Schizosaccharomyces pombe (strain 972 / ATCC 24843) (Fission yeast).